The following is a 174-amino-acid chain: UPF0336 protein MAP_3996c (174 aa).

In terms of domain architecture, MaoC-like spans 11 to 131; that stretch reads IGSHYRAPDY…VLAEIRSEVT (121 aa).

The protein belongs to the UPF0336 family.

In Mycolicibacterium paratuberculosis (strain ATCC BAA-968 / K-10) (Mycobacterium paratuberculosis), this protein is UPF0336 protein MAP_3996c.